Reading from the N-terminus, the 124-residue chain is Ribosome-binding factor A (124 aa).

It belongs to the RbfA family. In terms of assembly, monomer. Binds 30S ribosomal subunits, but not 50S ribosomal subunits or 70S ribosomes.

Its subcellular location is the cytoplasm. Its function is as follows. One of several proteins that assist in the late maturation steps of the functional core of the 30S ribosomal subunit. Associates with free 30S ribosomal subunits (but not with 30S subunits that are part of 70S ribosomes or polysomes). Required for efficient processing of 16S rRNA. May interact with the 5'-terminal helix region of 16S rRNA. This chain is Ribosome-binding factor A, found in Buchnera aphidicola subsp. Schizaphis graminum (strain Sg).